The following is a 65-amino-acid chain: MTKAAELRQKDVAGLEAEVKSLQKAHFGLRMQKATQQLGNTNTLRTTRRDIARAKTILAEKQAAK.

This sequence belongs to the universal ribosomal protein uL29 family.

The sequence is that of Large ribosomal subunit protein uL29 from Delftia acidovorans (strain DSM 14801 / SPH-1).